A 340-amino-acid polypeptide reads, in one-letter code: 4-hydroxy-3-methylbut-2-enyl diphosphate reductase (340 aa).

C13 contacts [4Fe-4S] cluster. H42 and H75 together coordinate (2E)-4-hydroxy-3-methylbut-2-enyl diphosphate. Residues H42 and H75 each coordinate dimethylallyl diphosphate. Isopentenyl diphosphate-binding residues include H42 and H75. Residue C97 coordinates [4Fe-4S] cluster. Residue H125 coordinates (2E)-4-hydroxy-3-methylbut-2-enyl diphosphate. H125 lines the dimethylallyl diphosphate pocket. Position 125 (H125) interacts with isopentenyl diphosphate. The Proton donor role is filled by E127. Residue T165 participates in (2E)-4-hydroxy-3-methylbut-2-enyl diphosphate binding. C195 lines the [4Fe-4S] cluster pocket. 4 residues coordinate (2E)-4-hydroxy-3-methylbut-2-enyl diphosphate: S223, S224, N225, and S267. 4 residues coordinate dimethylallyl diphosphate: S223, S224, N225, and S267. Positions 223, 224, 225, and 267 each coordinate isopentenyl diphosphate. Positions N317 to A340 are disordered. The span at S331–A340 shows a compositional bias: polar residues.

It belongs to the IspH family. [4Fe-4S] cluster is required as a cofactor.

It catalyses the reaction isopentenyl diphosphate + 2 oxidized [2Fe-2S]-[ferredoxin] + H2O = (2E)-4-hydroxy-3-methylbut-2-enyl diphosphate + 2 reduced [2Fe-2S]-[ferredoxin] + 2 H(+). The catalysed reaction is dimethylallyl diphosphate + 2 oxidized [2Fe-2S]-[ferredoxin] + H2O = (2E)-4-hydroxy-3-methylbut-2-enyl diphosphate + 2 reduced [2Fe-2S]-[ferredoxin] + 2 H(+). It participates in isoprenoid biosynthesis; dimethylallyl diphosphate biosynthesis; dimethylallyl diphosphate from (2E)-4-hydroxy-3-methylbutenyl diphosphate: step 1/1. It functions in the pathway isoprenoid biosynthesis; isopentenyl diphosphate biosynthesis via DXP pathway; isopentenyl diphosphate from 1-deoxy-D-xylulose 5-phosphate: step 6/6. In terms of biological role, catalyzes the conversion of 1-hydroxy-2-methyl-2-(E)-butenyl 4-diphosphate (HMBPP) into a mixture of isopentenyl diphosphate (IPP) and dimethylallyl diphosphate (DMAPP). Acts in the terminal step of the DOXP/MEP pathway for isoprenoid precursor biosynthesis. This Zymomonas mobilis subsp. mobilis (strain ATCC 31821 / ZM4 / CP4) protein is 4-hydroxy-3-methylbut-2-enyl diphosphate reductase.